We begin with the raw amino-acid sequence, 209 residues long: GTP-binding nuclear protein Ran1A (209 aa).

The Small GTPase Ran-type domain occupies asparagine 1–aspartate 162. Aspartate 9–threonine 16 contacts GTP. The segment at lysine 28–valine 36 is switch-I. Residues glycine 59, asparagine 113–aspartate 116, and serine 141–lysine 143 contribute to the GTP site. Residues glycine 59 to glutamine 75 form a switch-II region. Residues glutamine 187–alanine 196 show a composition bias toward low complexity. The disordered stretch occupies residues glutamine 187–aspartate 209.

This sequence belongs to the small GTPase superfamily. Ran family. In terms of assembly, found in a nuclear export complex with RanGTP, exportin and pre-miRNA.

It localises to the nucleus. Functionally, GTP-binding protein involved in nucleocytoplasmic transport. Required for the import of protein into the nucleus and also for RNA export. Involved in chromatin condensation and control of cell cycle. The sequence is that of GTP-binding nuclear protein Ran1A (RAN1A) from Lotus japonicus (Lotus corniculatus var. japonicus).